The sequence spans 390 residues: Aspartate carbamoyltransferase, chloroplastic (390 aa).

A chloroplast-targeting transit peptide spans 1–68 (MSIASSLTSA…NLTRNVGPVR (68 aa)). Residues R136 and T137 each contribute to the carbamoyl phosphate site. R136 and T137 together coordinate UMP. K166 serves as a coordination point for L-aspartate. Carbamoyl phosphate is bound by residues R187, H215, and Q218. UMP-binding residues include R187 and H215. R248 and R310 together coordinate UMP. Residues R248 and R310 each contribute to the L-aspartate site. Carbamoyl phosphate is bound by residues L350 and P351.

It belongs to the aspartate/ornithine carbamoyltransferase superfamily. ATCase family. Homotrimer.

It is found in the plastid. The protein resides in the chloroplast. It carries out the reaction carbamoyl phosphate + L-aspartate = N-carbamoyl-L-aspartate + phosphate + H(+). It functions in the pathway pyrimidine metabolism; UMP biosynthesis via de novo pathway; (S)-dihydroorotate from bicarbonate: step 2/3. With respect to regulation, feedback inhibited by UMP. Functionally, catalyzes the condensation of carbamoyl phosphate and aspartate to form carbamoyl aspartate and inorganic phosphate, the committed step in the de novo pyrimidine nucleotide biosynthesis pathway. This is Aspartate carbamoyltransferase, chloroplastic (PYRB) from Arabidopsis thaliana (Mouse-ear cress).